We begin with the raw amino-acid sequence, 73 residues long: UPF0346 protein SAS1364 (73 aa).

Belongs to the UPF0346 family.

The sequence is that of UPF0346 protein SAS1364 from Staphylococcus aureus (strain MSSA476).